Consider the following 254-residue polypeptide: 5-oxoprolinase subunit A 1 (254 aa).

The protein belongs to the LamB/PxpA family. As to quaternary structure, forms a complex composed of PxpA, PxpB and PxpC.

The enzyme catalyses 5-oxo-L-proline + ATP + 2 H2O = L-glutamate + ADP + phosphate + H(+). In terms of biological role, catalyzes the cleavage of 5-oxoproline to form L-glutamate coupled to the hydrolysis of ATP to ADP and inorganic phosphate. In Burkholderia pseudomallei (strain K96243), this protein is 5-oxoprolinase subunit A 1.